The primary structure comprises 112 residues: 87 kDa annexin-binding protein (112 aa).

As to quaternary structure, binds annexin.

The polypeptide is 87 kDa annexin-binding protein (Physarum polycephalum (Slime mold)).